Reading from the N-terminus, the 458-residue chain is Exodeoxyribonuclease 7 large subunit (458 aa).

This sequence belongs to the XseA family. In terms of assembly, heterooligomer composed of large and small subunits.

It is found in the cytoplasm. The enzyme catalyses Exonucleolytic cleavage in either 5'- to 3'- or 3'- to 5'-direction to yield nucleoside 5'-phosphates.. Functionally, bidirectionally degrades single-stranded DNA into large acid-insoluble oligonucleotides, which are then degraded further into small acid-soluble oligonucleotides. This chain is Exodeoxyribonuclease 7 large subunit, found in Stutzerimonas stutzeri (strain A1501) (Pseudomonas stutzeri).